Here is a 250-residue protein sequence, read N- to C-terminus: 2,3-bisphosphoglycerate-dependent phosphoglycerate mutase (250 aa).

Substrate-binding positions include 10-17 (RHGESQWN), 23-24 (TG), arginine 62, 89-92 (ERHY), lysine 100, 116-117 (RR), and 185-186 (GN). Histidine 11 acts as the Tele-phosphohistidine intermediate in catalysis. The Proton donor/acceptor role is filled by glutamate 89.

The protein belongs to the phosphoglycerate mutase family. BPG-dependent PGAM subfamily. In terms of assembly, homodimer.

It carries out the reaction (2R)-2-phosphoglycerate = (2R)-3-phosphoglycerate. It functions in the pathway carbohydrate degradation; glycolysis; pyruvate from D-glyceraldehyde 3-phosphate: step 3/5. Its function is as follows. Catalyzes the interconversion of 2-phosphoglycerate and 3-phosphoglycerate. The chain is 2,3-bisphosphoglycerate-dependent phosphoglycerate mutase from Sodalis glossinidius (strain morsitans).